Here is an 804-residue protein sequence, read N- to C-terminus: Probable replication endonuclease from prophage-like region (804 aa).

Active-site O-(5'-phospho-DNA)-tyrosine intermediate residues include Y498 and Y502.

It belongs to the phage GPA family.

In terms of biological role, possible endonuclease which induces a single-strand cut and initiates DNA replication. The protein is Probable replication endonuclease from prophage-like region of Escherichia coli O6:H1 (strain CFT073 / ATCC 700928 / UPEC).